Consider the following 75-residue polypeptide: Penaeidin-3n (75 aa).

The signal sequence occupies residues 1-19; it reads MRLVVCLVFLASFALVCQG. A Pyrrolidone carboxylic acid modification is found at Q20. 2 disulfides stabilise this stretch: C44–C59 and C48–C66. S74 carries the post-translational modification Serine amide.

The protein belongs to the penaeidin family.

It localises to the cytoplasmic granule. In terms of biological role, antibacterial and antifungal activity. Presents chitin-binding activity. The chain is Penaeidin-3n from Penaeus setiferus (Atlantic white shrimp).